Here is a 332-residue protein sequence, read N- to C-terminus: Holliday junction branch migration complex subunit RuvB (332 aa).

Residues 1-181 (MARILDNNVM…FGITGHMEYY (181 aa)) are large ATPase domain (RuvB-L). Residues Leu-20, Arg-21, Gly-62, Lys-65, Thr-66, Thr-67, 128–130 (EDF), Arg-171, Tyr-181, and Arg-218 contribute to the ATP site. Thr-66 is a Mg(2+) binding site. Positions 182–252 (QEKDLTEIVE…ITDRALTMLD (71 aa)) are small ATPAse domain (RuvB-S). The tract at residues 255-332 (REGLNYIDQK…RHLGYPYQNT (78 aa)) is head domain (RuvB-H). DNA contacts are provided by Arg-291, Arg-310, Arg-312, and Arg-315.

It belongs to the RuvB family. In terms of assembly, homohexamer. Forms an RuvA(8)-RuvB(12)-Holliday junction (HJ) complex. HJ DNA is sandwiched between 2 RuvA tetramers; dsDNA enters through RuvA and exits via RuvB. An RuvB hexamer assembles on each DNA strand where it exits the tetramer. Each RuvB hexamer is contacted by two RuvA subunits (via domain III) on 2 adjacent RuvB subunits; this complex drives branch migration. In the full resolvosome a probable DNA-RuvA(4)-RuvB(12)-RuvC(2) complex forms which resolves the HJ.

It localises to the cytoplasm. It catalyses the reaction ATP + H2O = ADP + phosphate + H(+). The RuvA-RuvB-RuvC complex processes Holliday junction (HJ) DNA during genetic recombination and DNA repair, while the RuvA-RuvB complex plays an important role in the rescue of blocked DNA replication forks via replication fork reversal (RFR). RuvA specifically binds to HJ cruciform DNA, conferring on it an open structure. The RuvB hexamer acts as an ATP-dependent pump, pulling dsDNA into and through the RuvAB complex. RuvB forms 2 homohexamers on either side of HJ DNA bound by 1 or 2 RuvA tetramers; 4 subunits per hexamer contact DNA at a time. Coordinated motions by a converter formed by DNA-disengaged RuvB subunits stimulates ATP hydrolysis and nucleotide exchange. Immobilization of the converter enables RuvB to convert the ATP-contained energy into a lever motion, pulling 2 nucleotides of DNA out of the RuvA tetramer per ATP hydrolyzed, thus driving DNA branch migration. The RuvB motors rotate together with the DNA substrate, which together with the progressing nucleotide cycle form the mechanistic basis for DNA recombination by continuous HJ branch migration. Branch migration allows RuvC to scan DNA until it finds its consensus sequence, where it cleaves and resolves cruciform DNA. This chain is Holliday junction branch migration complex subunit RuvB, found in Streptococcus pyogenes serotype M18 (strain MGAS8232).